The primary structure comprises 563 residues: Proline--tRNA ligase (563 aa).

This sequence belongs to the class-II aminoacyl-tRNA synthetase family. ProS type 1 subfamily. In terms of assembly, homodimer.

Its subcellular location is the cytoplasm. It catalyses the reaction tRNA(Pro) + L-proline + ATP = L-prolyl-tRNA(Pro) + AMP + diphosphate. Functionally, catalyzes the attachment of proline to tRNA(Pro) in a two-step reaction: proline is first activated by ATP to form Pro-AMP and then transferred to the acceptor end of tRNA(Pro). As ProRS can inadvertently accommodate and process non-cognate amino acids such as alanine and cysteine, to avoid such errors it has two additional distinct editing activities against alanine. One activity is designated as 'pretransfer' editing and involves the tRNA(Pro)-independent hydrolysis of activated Ala-AMP. The other activity is designated 'posttransfer' editing and involves deacylation of mischarged Ala-tRNA(Pro). The misacylated Cys-tRNA(Pro) is not edited by ProRS. This is Proline--tRNA ligase from Persephonella marina (strain DSM 14350 / EX-H1).